Here is a 201-residue protein sequence, read N- to C-terminus: Probable quinol oxidase subunit 3 (201 aa).

5 helical membrane passes run 20–40 (LGFWIFITAEFALFGTLFATL), 62–82 (LVLIMTFALLFSSYTCGIAIY), 91–111 (LMMFWMIITLLLGLVFVGFEI), 133–153 (FFILLGTHGCHVSLGIVWAIC), and 172–192 (FIVSLYWHFLDVVWVFIFTAV).

Belongs to the cytochrome c oxidase subunit 3 family.

It localises to the cell membrane. The enzyme catalyses 2 a quinol + O2 = 2 a quinone + 2 H2O. Catalyzes quinol oxidation with the concomitant reduction of oxygen to water. The protein is Probable quinol oxidase subunit 3 (qoxC) of Staphylococcus aureus (strain MSSA476).